A 309-amino-acid polypeptide reads, in one-letter code: Glutaminase (309 aa).

7 residues coordinate substrate: Ser64, Asn114, Glu160, Asn167, Tyr191, Tyr243, and Val261.

The protein belongs to the glutaminase family. Homotetramer.

It catalyses the reaction L-glutamine + H2O = L-glutamate + NH4(+). The protein is Glutaminase of Methylobacterium radiotolerans (strain ATCC 27329 / DSM 1819 / JCM 2831 / NBRC 15690 / NCIMB 10815 / 0-1).